The chain runs to 406 residues: Bifunctional protein GlmU (406 aa).

The segment at Met1 to Arg221 is pyrophosphorylase. Residues Leu5–Gly8, Lys19, Gln68, Gly73–Thr74, Tyr98–Asp100, Gly134, Glu148, Asn162, and Asn219 each bind UDP-N-acetyl-alpha-D-glucosamine. Residue Asp100 coordinates Mg(2+). Asn219 is a binding site for Mg(2+). The segment at Asn222–Ser242 is linker. Residues Gly243–Lys406 form an N-acetyltransferase region. Lys308 contributes to the UDP-N-acetyl-alpha-D-glucosamine binding site. His320 (proton acceptor) is an active-site residue. The UDP-N-acetyl-alpha-D-glucosamine site is built by Tyr323 and Asn334. Acetyl-CoA contacts are provided by residues Ala337, Asn343 to Tyr344, Ala380, and Arg397.

It in the N-terminal section; belongs to the N-acetylglucosamine-1-phosphate uridyltransferase family. This sequence in the C-terminal section; belongs to the transferase hexapeptide repeat family. As to quaternary structure, homotrimer. It depends on Mg(2+) as a cofactor.

It localises to the cytoplasm. It carries out the reaction alpha-D-glucosamine 1-phosphate + acetyl-CoA = N-acetyl-alpha-D-glucosamine 1-phosphate + CoA + H(+). The enzyme catalyses N-acetyl-alpha-D-glucosamine 1-phosphate + UTP + H(+) = UDP-N-acetyl-alpha-D-glucosamine + diphosphate. It participates in nucleotide-sugar biosynthesis; UDP-N-acetyl-alpha-D-glucosamine biosynthesis; N-acetyl-alpha-D-glucosamine 1-phosphate from alpha-D-glucosamine 6-phosphate (route II): step 2/2. It functions in the pathway nucleotide-sugar biosynthesis; UDP-N-acetyl-alpha-D-glucosamine biosynthesis; UDP-N-acetyl-alpha-D-glucosamine from N-acetyl-alpha-D-glucosamine 1-phosphate: step 1/1. Its pathway is bacterial outer membrane biogenesis; LPS lipid A biosynthesis. Functionally, catalyzes the last two sequential reactions in the de novo biosynthetic pathway for UDP-N-acetylglucosamine (UDP-GlcNAc). The C-terminal domain catalyzes the transfer of acetyl group from acetyl coenzyme A to glucosamine-1-phosphate (GlcN-1-P) to produce N-acetylglucosamine-1-phosphate (GlcNAc-1-P), which is converted into UDP-GlcNAc by the transfer of uridine 5-monophosphate (from uridine 5-triphosphate), a reaction catalyzed by the N-terminal domain. The polypeptide is Bifunctional protein GlmU (Wolbachia sp. subsp. Brugia malayi (strain TRS)).